The chain runs to 377 residues: S-adenosylmethionine synthase (377 aa).

H14 provides a ligand contact to ATP. Position 16 (D16) interacts with Mg(2+). Residue E42 participates in K(+) binding. Q98 serves as a coordination point for L-methionine. Residues 98–108 are flexible loop; that stretch reads QSADIALGIDL. ATP is bound by residues 162-164, 228-229, D237, 243-244, A260, and K264; these read DMK, RF, and RK. Position 237 (D237) interacts with L-methionine. Residue K268 participates in L-methionine binding.

This sequence belongs to the AdoMet synthase family. As to quaternary structure, homotetramer; dimer of dimers. Mg(2+) serves as cofactor. It depends on K(+) as a cofactor.

Its subcellular location is the cytoplasm. It carries out the reaction L-methionine + ATP + H2O = S-adenosyl-L-methionine + phosphate + diphosphate. It functions in the pathway amino-acid biosynthesis; S-adenosyl-L-methionine biosynthesis; S-adenosyl-L-methionine from L-methionine: step 1/1. Catalyzes the formation of S-adenosylmethionine (AdoMet) from methionine and ATP. The overall synthetic reaction is composed of two sequential steps, AdoMet formation and the subsequent tripolyphosphate hydrolysis which occurs prior to release of AdoMet from the enzyme. The protein is S-adenosylmethionine synthase of Mesoplasma florum (strain ATCC 33453 / NBRC 100688 / NCTC 11704 / L1) (Acholeplasma florum).